Here is a 259-residue protein sequence, read N- to C-terminus: Uridylate kinase (259 aa).

Lysine 21–glycine 24 is a binding site for ATP. UMP is bound at residue glycine 63. ATP is bound by residues glycine 64 and arginine 68. UMP contacts are provided by residues aspartate 83 and threonine 144 to threonine 151. Positions 171, 177, and 180 each coordinate ATP.

This sequence belongs to the UMP kinase family. Homohexamer.

The protein localises to the cytoplasm. It catalyses the reaction UMP + ATP = UDP + ADP. It functions in the pathway pyrimidine metabolism; CTP biosynthesis via de novo pathway; UDP from UMP (UMPK route): step 1/1. Inhibited by UTP. Its function is as follows. Catalyzes the reversible phosphorylation of UMP to UDP. This Salinibacter ruber (strain DSM 13855 / M31) protein is Uridylate kinase.